Reading from the N-terminus, the 283-residue chain is 2-dehydro-3-deoxyphosphooctonate aldolase (283 aa).

It belongs to the KdsA family.

The protein localises to the cytoplasm. The enzyme catalyses D-arabinose 5-phosphate + phosphoenolpyruvate + H2O = 3-deoxy-alpha-D-manno-2-octulosonate-8-phosphate + phosphate. The protein operates within carbohydrate biosynthesis; 3-deoxy-D-manno-octulosonate biosynthesis; 3-deoxy-D-manno-octulosonate from D-ribulose 5-phosphate: step 2/3. Its pathway is bacterial outer membrane biogenesis; lipopolysaccharide biosynthesis. The sequence is that of 2-dehydro-3-deoxyphosphooctonate aldolase from Vibrio cholerae serotype O1 (strain ATCC 39315 / El Tor Inaba N16961).